The chain runs to 91 residues: UPF0250 protein PFLU_5418 (91 aa).

It belongs to the UPF0250 family.

In Pseudomonas fluorescens (strain SBW25), this protein is UPF0250 protein PFLU_5418.